Here is a 208-residue protein sequence, read N- to C-terminus: Small ribosomal subunit protein uS4 (208 aa).

The 63-residue stretch at 98–160 (CRLDNVVYRM…AKKQSRIQLA (63 aa)) folds into the S4 RNA-binding domain.

The protein belongs to the universal ribosomal protein uS4 family. In terms of assembly, part of the 30S ribosomal subunit. Contacts protein S5. The interaction surface between S4 and S5 is involved in control of translational fidelity.

Its function is as follows. One of the primary rRNA binding proteins, it binds directly to 16S rRNA where it nucleates assembly of the body of the 30S subunit. Functionally, with S5 and S12 plays an important role in translational accuracy. This Vesicomyosocius okutanii subsp. Calyptogena okutanii (strain HA) protein is Small ribosomal subunit protein uS4.